The primary structure comprises 382 residues: Alanine racemase 1 (382 aa).

The active-site Proton acceptor; specific for D-alanine is the Lys39. Lys39 carries the N6-(pyridoxal phosphate)lysine modification. Substrate is bound at residue Arg138. Tyr265 functions as the Proton acceptor; specific for L-alanine in the catalytic mechanism. Met312 contributes to the substrate binding site.

It belongs to the alanine racemase family. The cofactor is pyridoxal 5'-phosphate.

It carries out the reaction L-alanine = D-alanine. The protein operates within amino-acid biosynthesis; D-alanine biosynthesis; D-alanine from L-alanine: step 1/1. Catalyzes the interconversion of L-alanine and D-alanine. May also act on other amino acids. The sequence is that of Alanine racemase 1 (alr1) from Staphylococcus aureus (strain NCTC 8325 / PS 47).